A 500-amino-acid polypeptide reads, in one-letter code: Transcription termination factor MTERF8, chloroplastic (500 aa).

The N-terminal 64 residues, 1 to 64, are a transit peptide targeting the chloroplast; sequence MVILSLVSCS…NHREPALTFR (64 aa).

Belongs to the mTERF family.

Its subcellular location is the plastid. The protein resides in the chloroplast. In terms of biological role, transcription termination factor that is transcriptionally active in chloroplasts. This is Transcription termination factor MTERF8, chloroplastic from Arabidopsis thaliana (Mouse-ear cress).